Here is a 632-residue protein sequence, read N- to C-terminus: POU domain, class 2, transcription factor 1 (632 aa).

A phosphothreonine mark is found at Thr157 and Thr163. Positions 167-241 constitute a POU-specific domain; that stretch reads EEPSDLEELE…LLEKWLNDAE (75 aa). Ser170 is modified (phosphoserine). Positions 243–258 are enriched in low complexity; the sequence is LSSDSTASSPSALNSP. The tract at residues 243 to 273 is disordered; the sequence is LSSDSTASSPSALNSPGLGAEGLNRRRKKRT. The segment at residues 268–327 is a DNA-binding region (homeobox); it reads RRKKRTSIETNIRVALEKSFMENQKPTSEDITLIAEQLNMEKEVIRVWFCNRRQKEKRIN. Ser274 and Ser337 each carry phosphoserine. Residues 385-448 are disordered; that stretch reads GTTDSTSNNT…STPLPSPLGA (64 aa). Residues 394–441 are compositionally biased toward low complexity; sequence TATVISTAPPASSAVTSPSLSPSPSASASTSEASSASETSTTQTTSTP.

This sequence belongs to the POU transcription factor family. Class-2 subfamily. In terms of assembly, interacts with POU2AF1; the interaction increases POU2F1 transactivation activity. Interacts with NR3C1, AR, PGR and HCFC1. In terms of processing, phosphorylated by PRKDC. In terms of tissue distribution, widely expressed.

The protein resides in the nucleus. Transcription factor that binds to the octamer motif (5'-ATTTGCAT-3') and activates the promoters of the genes for some small nuclear RNAs (snRNA) and of genes such as those for histone H2B and immunoglobulins. Modulates transcription transactivation by NR3C1, AR and PGR. In Rattus norvegicus (Rat), this protein is POU domain, class 2, transcription factor 1 (Pou2f1).